Here is a 391-residue protein sequence, read N- to C-terminus: Serine protease 7 (391 aa).

The N-terminal stretch at 1 to 27 (MKSTRKVVGIFLATCLLPFTVLQNVAA) is a signal peptide. Residues 28–136 (QGSCRNPNQK…KCGPHSFSNK (109 aa)) constitute a propeptide, activation peptide. Residues 30 to 84 (SCRNPNQKQGQCLSIYDCQSLLSVIQQSYVSPEDRTFLRNSQCLDGVGRQPYVCC) enclose the Clip domain. Cystine bridges form between Cys31–Cys83, Cys41–Cys72, and Cys47–Cys84. The interval 91–121 (GSQEATSAAPPPTTTSSSSRGQDGQAGLGNL) is disordered. Disulfide bonds link Cys128/Cys264, Cys167/Cys183, Cys211/Cys216, Cys310/Cys327, and Cys337/Cys366. In terms of domain architecture, Peptidase S1 spans 137 to 390 (VYNGNDTAID…YMDWIVETIR (254 aa)). N-linked (GlcNAc...) asparagine glycosylation is present at Asn141. Catalysis depends on His182, which acts as the Charge relay system. Residues Glu202, Asp204, Lys207, and Asp210 each contribute to the Ca(2+) site. Catalysis depends on Asp244, which acts as the Charge relay system. Ser341 functions as the Charge relay system in the catalytic mechanism.

Belongs to the peptidase S1 family. CLIP subfamily. As to quaternary structure, interacts with Spn27A.

It localises to the secreted. Functionally, serine protease that, by cleaving and activating prophenoloxidase (PPO1) after immune challenge, plays an essential role in the melanization immune response to septic wounding. May function in diverse Hayan-dependent PPO1-activating cascades that are negatively controlled by different serpin proteins; Spn27A in the hemolymph and Spn77BA in the trachea. Important for the innate immune response to fungi. Regulation of melanization and PPO1 activation appears to be largely independent of the Toll signaling pathway. The polypeptide is Serine protease 7 (Drosophila melanogaster (Fruit fly)).